The primary structure comprises 214 residues: ATP-dependent Clp protease proteolytic subunit (214 aa).

Residue Ser113 is the Nucleophile of the active site. His138 is a catalytic residue.

This sequence belongs to the peptidase S14 family. Fourteen ClpP subunits assemble into 2 heptameric rings which stack back to back to give a disk-like structure with a central cavity, resembling the structure of eukaryotic proteasomes.

Its subcellular location is the cytoplasm. It carries out the reaction Hydrolysis of proteins to small peptides in the presence of ATP and magnesium. alpha-casein is the usual test substrate. In the absence of ATP, only oligopeptides shorter than five residues are hydrolyzed (such as succinyl-Leu-Tyr-|-NHMec, and Leu-Tyr-Leu-|-Tyr-Trp, in which cleavage of the -Tyr-|-Leu- and -Tyr-|-Trp bonds also occurs).. Functionally, cleaves peptides in various proteins in a process that requires ATP hydrolysis. Has a chymotrypsin-like activity. Plays a major role in the degradation of misfolded proteins. This is ATP-dependent Clp protease proteolytic subunit from Alkalilimnicola ehrlichii (strain ATCC BAA-1101 / DSM 17681 / MLHE-1).